Consider the following 105-residue polypeptide: Small ribosomal subunit protein uS10 (105 aa).

This sequence belongs to the universal ribosomal protein uS10 family. In terms of assembly, part of the 30S ribosomal subunit.

Involved in the binding of tRNA to the ribosomes. This Nitratidesulfovibrio vulgaris (strain DSM 19637 / Miyazaki F) (Desulfovibrio vulgaris) protein is Small ribosomal subunit protein uS10.